A 207-amino-acid chain; its full sequence is MMKPHNLFQFLAVCSLTVAVASAQAGAVDALKQFNNDADGISGSFTQTVQSKKKTQTAHGTFKILRPGLFKWEYTLPYRQTIVGDGQTVWLYDVDLAQVTKSSQDQAIGGSPAAILSNKTALESSYTLKEDGSSNGIDYVRATPKRNNAGYQYIRIGFKGGNLAAMQLKDSFGNQTSISFGGLNTNPQLSRGAFKFTPPKGVDVLSN.

The N-terminal stretch at 1–23 (MMKPHNLFQFLAVCSLTVAVASA) is a signal peptide.

Belongs to the LolA family. Monomer.

Its subcellular location is the periplasm. Its function is as follows. Participates in the translocation of lipoproteins from the inner membrane to the outer membrane. Only forms a complex with a lipoprotein if the residue after the N-terminal Cys is not an aspartate (The Asp acts as a targeting signal to indicate that the lipoprotein should stay in the inner membrane). The polypeptide is Outer-membrane lipoprotein carrier protein (Neisseria gonorrhoeae (strain ATCC 700825 / FA 1090)).